The following is a 154-amino-acid chain: Endoribonuclease YbeY (154 aa).

Zn(2+) contacts are provided by His-114, His-118, and His-124.

It belongs to the endoribonuclease YbeY family. It depends on Zn(2+) as a cofactor.

It is found in the cytoplasm. Single strand-specific metallo-endoribonuclease involved in late-stage 70S ribosome quality control and in maturation of the 3' terminus of the 16S rRNA. This chain is Endoribonuclease YbeY, found in Anaplasma phagocytophilum (strain HZ).